A 362-amino-acid polypeptide reads, in one-letter code: MGSTSAERTQMGEDEACSYAMTITSGSVPPMVLKAVIELDVLEIIKRAGPGAHLSPAEIAAQLPATNPDAATMLDRMLRLLASYSILSYSLRTLPDGRVERLYGLAPVCQFLTKNEDGVTLGALSLMNQDKVLMESWYHLKDAVLDGGIPFNKAYGMTAFEYHGTDPRFNKIFNNGMSNHSTITMKRILENYKGFEGLSTLVDVGGGTGATLNMIISKHPAIKGINFDLPHVIEDAPTYNGVEHVGGDMFVSVPKGDAIFMKWICHDWSDEHCLNFLKNCYAALPDHGKVIVCEYILPVAPETSHAARTVFHVDAIMLAHNPGGKERTEQEFEALAKGAGFEGFRVACSAYGTKVMEFLKKA.

Positions 181, 205, 228, 248, and 262 each coordinate S-adenosyl-L-homocysteine. Aspartate 228 lines the S-adenosyl-L-methionine pocket. The active-site Proton acceptor is the histidine 266.

Belongs to the class I-like SAM-binding methyltransferase superfamily. Cation-independent O-methyltransferase family. Homodimer. As to expression, mainly expressed in vascular and cortical tissues.

It carries out the reaction dopamine + S-adenosyl-L-methionine = 3-methoxytyramine + S-adenosyl-L-homocysteine + H(+). Its pathway is aromatic compound metabolism. It participates in alkaloid biosynthesis. Functionally, O-methyltransferase participating in the biosynthesis of natural products derived from phenylethylamine, including mescaline, a natural hallucinogen potentially used in psychotherapeutic treatments. Catalyzes the O-methylation of dopamine and 4,5-dihydroxy-3-methoxyphenethylamine. This chain is O-methyltransferase 13, found in Lophophora williamsii (Peyote).